We begin with the raw amino-acid sequence, 336 residues long: Pentalenene synthase (336 aa).

Asp80, Asp84, Asn219, Ser223, and Glu227 together coordinate Mg(2+). The short motif at 80–84 is the DDXXD motif element; that stretch reads DDLFD.

Belongs to the terpene synthase family. In terms of assembly, monomer. Mg(2+) serves as cofactor.

The enzyme catalyses (2E,6E)-farnesyl diphosphate = pentalenene + diphosphate. It functions in the pathway antibiotic biosynthesis; neopentalenolactone biosynthesis. Catalyzes the cyclization of farnesyl diphosphate (FPP) to the tricyclic sesquiterpene pentalenene in the biosynthesis of neopentalenolactone antibiotic. The chain is Pentalenene synthase (ptlA) from Streptomyces avermitilis (strain ATCC 31267 / DSM 46492 / JCM 5070 / NBRC 14893 / NCIMB 12804 / NRRL 8165 / MA-4680).